A 205-amino-acid polypeptide reads, in one-letter code: Small ribosomal subunit protein uS4 (205 aa).

An S4 RNA-binding domain is found at 94-157; the sequence is SRLDTVVYRM…KQIPLIQESV (64 aa).

The protein belongs to the universal ribosomal protein uS4 family. Part of the 30S ribosomal subunit. Contacts protein S5. The interaction surface between S4 and S5 is involved in control of translational fidelity.

One of the primary rRNA binding proteins, it binds directly to 16S rRNA where it nucleates assembly of the body of the 30S subunit. Functionally, with S5 and S12 plays an important role in translational accuracy. This is Small ribosomal subunit protein uS4 from Rickettsia felis (strain ATCC VR-1525 / URRWXCal2) (Rickettsia azadi).